The primary structure comprises 261 residues: NAD-capped RNA hydrolase NudC (261 aa).

Substrate is bound at residue Arg69. Residues Cys98 and Cys101 each contribute to the Zn(2+) site. Glu111 contacts substrate. Residues Cys116 and Cys119 each coordinate Zn(2+). Tyr124 is a binding site for substrate. The Nudix hydrolase domain occupies 125-248; sequence PQIAPCIIVA…TVARRLIEDT (124 aa). Ala158, Glu174, and Glu178 together coordinate a divalent metal cation. The Nudix box signature appears at 159–180; it reads GFVEVGETLEQTVAREVMEESS. 192 to 199 is a substrate binding site; it reads QPWPFPQS. Glu219 lines the a divalent metal cation pocket. Residue Ala241 participates in substrate binding.

This sequence belongs to the Nudix hydrolase family. NudC subfamily. Homodimer. The cofactor is Mg(2+). Requires Mn(2+) as cofactor. It depends on Zn(2+) as a cofactor.

The catalysed reaction is a 5'-end NAD(+)-phospho-ribonucleoside in mRNA + H2O = a 5'-end phospho-adenosine-phospho-ribonucleoside in mRNA + beta-nicotinamide D-ribonucleotide + 2 H(+). It catalyses the reaction NAD(+) + H2O = beta-nicotinamide D-ribonucleotide + AMP + 2 H(+). It carries out the reaction NADH + H2O = reduced beta-nicotinamide D-ribonucleotide + AMP + 2 H(+). In terms of biological role, mRNA decapping enzyme that specifically removes the nicotinamide adenine dinucleotide (NAD) cap from a subset of mRNAs by hydrolyzing the diphosphate linkage to produce nicotinamide mononucleotide (NMN) and 5' monophosphate mRNA. The NAD-cap is present at the 5'-end of some mRNAs and stabilizes RNA against 5'-processing. Has preference for mRNAs with a 5'-end purine. Catalyzes the hydrolysis of a broad range of dinucleotide pyrophosphates. In Erwinia tasmaniensis (strain DSM 17950 / CFBP 7177 / CIP 109463 / NCPPB 4357 / Et1/99), this protein is NAD-capped RNA hydrolase NudC.